Reading from the N-terminus, the 242-residue chain is Probable transcriptional regulatory protein PG_0097 (242 aa).

The protein belongs to the TACO1 family.

It localises to the cytoplasm. This Porphyromonas gingivalis (strain ATCC BAA-308 / W83) protein is Probable transcriptional regulatory protein PG_0097.